The following is an 82-amino-acid chain: MGYFFIQSGASSNLSWFQTSHLLIRRKSAWTQHLSSLYQASGGLLLVTIITRDVNSTKAPFTGTLCGYRSVTRSSSQKGSQP.

This is an uncharacterized protein from Pigeon circovirus (PiCV).